Here is a 154-residue protein sequence, read N- to C-terminus: Ribonuclease H (154 aa).

In terms of domain architecture, RNase H type-1 spans 1–141; it reads MKRIEAYTDG…ADELARAGME (141 aa). Residues aspartate 9, glutamate 47, aspartate 69, and aspartate 133 each coordinate Mg(2+).

This sequence belongs to the RNase H family. In terms of assembly, monomer. Mg(2+) is required as a cofactor.

The protein resides in the cytoplasm. It carries out the reaction Endonucleolytic cleavage to 5'-phosphomonoester.. Its function is as follows. Endonuclease that specifically degrades the RNA of RNA-DNA hybrids. This Brucella abortus (strain 2308) protein is Ribonuclease H.